Here is a 138-residue protein sequence, read N- to C-terminus: Ribonuclease kappa-A (138 aa).

A signal peptide spans 1–24 (MVLYFSPVLTFFLANFFNSKSTTT). Residues 25–75 (ENLQVFLVENQHRDSKRKINPTFSKKGIEVRQQNENLWSKIVALRFDYSVW) lie on the Extracellular side of the membrane. A helical membrane pass occupies residues 76–96 (GIIQLVLMMGLFFYINSVALI). Over 97–138 (EDLPIDEEFNSVEEFYTAATSAYNQNAYTVGLPVHLCAYASI) the chain is Cytoplasmic.

It belongs to the RNase K family.

Its subcellular location is the membrane. Endoribonuclease. This chain is Ribonuclease kappa-A, found in Ceratitis capitata (Mediterranean fruit fly).